The sequence spans 632 residues: Putative acetyl-CoA decarbonylase/synthase complex subunit alpha-like (632 aa).

His-200, His-226, Cys-263, Cys-379, Cys-408, and Cys-438 together coordinate [Ni-4Fe-4S] cluster.

This sequence belongs to the Ni-containing carbon monoxide dehydrogenase family.

Functionally, part of the ACDS complex that catalyzes the reversible cleavage of acetyl-CoA, allowing autotrophic growth from CO(2). The alpha-epsilon subcomponent functions as a carbon monoxide dehydrogenase. The sequence is that of Putative acetyl-CoA decarbonylase/synthase complex subunit alpha-like (cdhA2) from Methanopyrus kandleri (strain AV19 / DSM 6324 / JCM 9639 / NBRC 100938).